Here is a 74-residue protein sequence, read N- to C-terminus: Translation initiation factor IF-1, chloroplastic (74 aa).

Residues 1-72 form the S1-like domain; it reads MEKQNIIEME…TKGRITYRLR (72 aa).

This sequence belongs to the IF-1 family. Component of the 30S ribosomal translation pre-initiation complex which assembles on the 30S ribosome in the order IF-2 and IF-3, IF-1 and N-formylmethionyl-tRNA(fMet); mRNA recruitment can occur at any time during PIC assembly.

The protein resides in the plastid. The protein localises to the chloroplast. Functionally, one of the essential components for the initiation of protein synthesis. Stabilizes the binding of IF-2 and IF-3 on the 30S subunit to which N-formylmethionyl-tRNA(fMet) subsequently binds. Helps modulate mRNA selection, yielding the 30S pre-initiation complex (PIC). Upon addition of the 50S ribosomal subunit IF-1, IF-2 and IF-3 are released leaving the mature 70S translation initiation complex. The chain is Translation initiation factor IF-1, chloroplastic from Chlorokybus atmophyticus (Soil alga).